Consider the following 995-residue polypeptide: Putative pentatricopeptide repeat-containing protein At5g09950 (995 aa).

PPR repeat units follow at residues 35-65, 66-100, 101-137, 138-169, 170-204, 205-241, 242-276, 278-303, 307-342, 348-378, 379-413, 414-448, 449-483, 484-515, 516-550, 551-581, 583-617, 618-652, 653-683, 684-718, 720-750, and 756-786; these read DVYL…MPLR, NCVS…GIFS, NQYA…SYAV, DAVV…IEVK, NSVS…GSRP, TEYT…GLLT, DLFV…NAVT, NGLM…MNSM, SPES…VITT, MVGI…MTDK, DSVS…DILP, GSFT…GIDL, NVSV…DQVS, WNSI…GQKL, NRIT…NIAD, EATT…MAER, DNVT…GQRL, DSFM…CLES, DVVV…MPVR, NSYS…GQTP, DHVT…MSDS, and RIEH…MPMK. The interval 791–868 is type E motif; that stretch reads IWRTVLGACC…EAGYSWVTMK (78 aa). The tract at residues 869–899 is type E(+) motif; it reads DGVHMFVAGDKSHPDADVIYKKLKELNRKMR. The type DYW motif stretch occupies residues 900 to 995; the sequence is DAGYVPQTGF…DGACSCSDFW (96 aa).

Belongs to the PPR family. PCMP-H subfamily.

This Arabidopsis thaliana (Mouse-ear cress) protein is Putative pentatricopeptide repeat-containing protein At5g09950 (PCMP-H35).